The following is a 30-amino-acid chain: Bowman-Birk type proteinase inhibitor 4 (30 aa).

2 disulfides stabilise this stretch: C9-C24 and C14-C22.

In terms of biological role, inhibits trypsin (IC(50)=17.60 nM) and, to a lesser extent, alpha-chymotrypsin (IC(50)=2.38 uM). In Lathyrus sativus (White vetchling), this protein is Bowman-Birk type proteinase inhibitor 4.